We begin with the raw amino-acid sequence, 333 residues long: D-fructose 1,6-bisphosphatase class 2/sedoheptulose 1,7-bisphosphatase (333 aa).

Residues aspartate 33, glutamate 57, aspartate 85, and glutamate 88 each contribute to the Mn(2+) site. Substrate is bound by residues 88-90, tyrosine 119, 164-166, and 186-188; these read EGT, RAR, and DGD. A Mn(2+)-binding site is contributed by glutamate 213.

This sequence belongs to the FBPase class 2 family. Homotetramer. The cofactor is Mn(2+).

The enzyme catalyses beta-D-fructose 1,6-bisphosphate + H2O = beta-D-fructose 6-phosphate + phosphate. It carries out the reaction D-sedoheptulose 1,7-bisphosphate + H2O = D-sedoheptulose 7-phosphate + phosphate. Its pathway is carbohydrate biosynthesis; Calvin cycle. Its function is as follows. Catalyzes the hydrolysis of fructose 1,6-bisphosphate (Fru 1,6-P2) and sedoheptulose 1,7-bisphosphate (Sed 1,7-P2) to fructose 6-phosphate and sedoheptulose 7-phosphate, respectively. The chain is D-fructose 1,6-bisphosphatase class 2/sedoheptulose 1,7-bisphosphatase from Prochlorococcus marinus subsp. pastoris (strain CCMP1986 / NIES-2087 / MED4).